The primary structure comprises 342 residues: Holliday junction branch migration complex subunit RuvB (342 aa).

The segment at 1-185 (MREDYLKSDD…FGINARLEYY (185 aa)) is large ATPase domain (RuvB-L). Residues Leu24, Arg25, Gly66, Lys69, Thr70, Thr71, 132 to 134 (EDY), Arg175, Tyr185, and Arg222 contribute to the ATP site. Thr70 provides a ligand contact to Mg(2+). The small ATPAse domain (RuvB-S) stretch occupies residues 186–256 (DAKLLTRIVQ…IARIALQALN (71 aa)). Positions 259–342 (HNGLDDMDNR…PPAQSGTLFE (84 aa)) are head domain (RuvB-H). Residues Arg314 and Arg319 each coordinate DNA.

It belongs to the RuvB family. As to quaternary structure, homohexamer. Forms an RuvA(8)-RuvB(12)-Holliday junction (HJ) complex. HJ DNA is sandwiched between 2 RuvA tetramers; dsDNA enters through RuvA and exits via RuvB. An RuvB hexamer assembles on each DNA strand where it exits the tetramer. Each RuvB hexamer is contacted by two RuvA subunits (via domain III) on 2 adjacent RuvB subunits; this complex drives branch migration. In the full resolvosome a probable DNA-RuvA(4)-RuvB(12)-RuvC(2) complex forms which resolves the HJ.

The protein localises to the cytoplasm. The enzyme catalyses ATP + H2O = ADP + phosphate + H(+). In terms of biological role, the RuvA-RuvB-RuvC complex processes Holliday junction (HJ) DNA during genetic recombination and DNA repair, while the RuvA-RuvB complex plays an important role in the rescue of blocked DNA replication forks via replication fork reversal (RFR). RuvA specifically binds to HJ cruciform DNA, conferring on it an open structure. The RuvB hexamer acts as an ATP-dependent pump, pulling dsDNA into and through the RuvAB complex. RuvB forms 2 homohexamers on either side of HJ DNA bound by 1 or 2 RuvA tetramers; 4 subunits per hexamer contact DNA at a time. Coordinated motions by a converter formed by DNA-disengaged RuvB subunits stimulates ATP hydrolysis and nucleotide exchange. Immobilization of the converter enables RuvB to convert the ATP-contained energy into a lever motion, pulling 2 nucleotides of DNA out of the RuvA tetramer per ATP hydrolyzed, thus driving DNA branch migration. The RuvB motors rotate together with the DNA substrate, which together with the progressing nucleotide cycle form the mechanistic basis for DNA recombination by continuous HJ branch migration. Branch migration allows RuvC to scan DNA until it finds its consensus sequence, where it cleaves and resolves cruciform DNA. The chain is Holliday junction branch migration complex subunit RuvB from Cytophaga hutchinsonii (strain ATCC 33406 / DSM 1761 / CIP 103989 / NBRC 15051 / NCIMB 9469 / D465).